The primary structure comprises 294 residues: NAD kinase (294 aa).

The active-site Proton acceptor is the Asp-74. NAD(+) contacts are provided by residues 74-75 (DG), Arg-79, 149-150 (NE), Asp-179, 190-195 (TGYSLS), and Ala-214.

It belongs to the NAD kinase family. A divalent metal cation is required as a cofactor.

The protein localises to the cytoplasm. The enzyme catalyses NAD(+) + ATP = ADP + NADP(+) + H(+). Its function is as follows. Involved in the regulation of the intracellular balance of NAD and NADP, and is a key enzyme in the biosynthesis of NADP. Catalyzes specifically the phosphorylation on 2'-hydroxyl of the adenosine moiety of NAD to yield NADP. This is NAD kinase from Flavobacterium johnsoniae (strain ATCC 17061 / DSM 2064 / JCM 8514 / BCRC 14874 / CCUG 350202 / NBRC 14942 / NCIMB 11054 / UW101) (Cytophaga johnsonae).